Reading from the N-terminus, the 271-residue chain is Tryptophan synthase alpha chain (271 aa).

Active-site proton acceptor residues include Glu-49 and Asp-60.

The protein belongs to the TrpA family. Tetramer of two alpha and two beta chains.

It catalyses the reaction (1S,2R)-1-C-(indol-3-yl)glycerol 3-phosphate + L-serine = D-glyceraldehyde 3-phosphate + L-tryptophan + H2O. Its pathway is amino-acid biosynthesis; L-tryptophan biosynthesis; L-tryptophan from chorismate: step 5/5. The alpha subunit is responsible for the aldol cleavage of indoleglycerol phosphate to indole and glyceraldehyde 3-phosphate. In Burkholderia thailandensis (strain ATCC 700388 / DSM 13276 / CCUG 48851 / CIP 106301 / E264), this protein is Tryptophan synthase alpha chain.